The chain runs to 353 residues: UPF0283 membrane protein YcjF (353 aa).

Residues 1 to 19 are compositionally biased toward basic and acidic residues; that stretch reads MSEPLKPRIDFAEPLKEES. The disordered stretch occupies residues 1-29; it reads MSEPLKPRIDFAEPLKEESTSTFKAQQTF. The span at 20–29 shows a compositional bias: polar residues; sequence TSTFKAQQTF. Transmembrane regions (helical) follow at residues 70–90, 100–120, and 213–233; these read MVLG…IQWT, AALG…GSVI, and ESTL…FIAW.

It belongs to the UPF0283 family.

The protein resides in the cell inner membrane. The sequence is that of UPF0283 membrane protein YcjF from Salmonella arizonae (strain ATCC BAA-731 / CDC346-86 / RSK2980).